A 354-amino-acid chain; its full sequence is MDENKQKALAAALGQIEKQFGKGSIMRLGDNRAMDVETISTGSLSLDIALGAGGLPMGRIVEIFGPESSGKTTLTLELIAAAQREGKTCAFIDAEHALDPVYAKKLGVNIDELLVSQPDTGEQALEICDALARSGAVDVIVVDSVAALTPKAEIEGEMGDSHMGLQARMLSQAMRKLTGNLKQSNCMCIFINQIRMKIGVMFGNPETTTGGNALKFYASVRLDIRRTGAIKEGEEVVGNETRIKVVKNKIAAPFKEANTQIMYGQGFNREGELIDLGVKHKMVEKSGAWYSYNGDKIGQGKANACKYLKENPEIAKTLDKKLREMLLNPENMQLIAETSSAADDVEFGAVPEEF.

ATP is bound at residue 65 to 72 (GPESSGKT).

The protein belongs to the RecA family.

It localises to the cytoplasm. In terms of biological role, can catalyze the hydrolysis of ATP in the presence of single-stranded DNA, the ATP-dependent uptake of single-stranded DNA by duplex DNA, and the ATP-dependent hybridization of homologous single-stranded DNAs. It interacts with LexA causing its activation and leading to its autocatalytic cleavage. The protein is Protein RecA of Vibrio cholerae serotype O1 (strain ATCC 39315 / El Tor Inaba N16961).